We begin with the raw amino-acid sequence, 128 residues long: Holo-[acyl-carrier-protein] synthase (128 aa).

Positions 10 and 59 each coordinate Mg(2+).

Belongs to the P-Pant transferase superfamily. AcpS family. It depends on Mg(2+) as a cofactor.

The protein localises to the cytoplasm. It carries out the reaction apo-[ACP] + CoA = holo-[ACP] + adenosine 3',5'-bisphosphate + H(+). Functionally, transfers the 4'-phosphopantetheine moiety from coenzyme A to a Ser of acyl-carrier-protein. This Syntrophotalea carbinolica (strain DSM 2380 / NBRC 103641 / GraBd1) (Pelobacter carbinolicus) protein is Holo-[acyl-carrier-protein] synthase.